Reading from the N-terminus, the 236-residue chain is SPbeta prophage-derived uncharacterized protein YomV (236 aa).

The sequence is that of SPbeta prophage-derived uncharacterized protein YomV (yomV) from Bacillus subtilis (strain 168).